The following is a 247-amino-acid chain: MTDQDSTYRPRSPDLSTFQSSIPPAVNSPIYPLASPLAHRASYDASPFFAPQYQQPPAPLGRVPQQYIPPFVDPNSPLSPDMARRSSRLARATEVAPMPEVSYAQPVLSEEPQQLPPPPPQPNPVASIEVKTKFPVARIKRIMQADEDVGKVAQVTPIAVSKALELFMISLVTKAAKEARDRNSKRVTATHLKQAVVKDEVLDFLADIIAKVPDQPAGGRKHDDDGSDQNEQPKRKRGGRRPKDDSD.

Residues 1–12 (MTDQDSTYRPRS) are compositionally biased toward basic and acidic residues. Disordered stretches follow at residues 1–31 (MTDQ…SPIY), 48–82 (FFAP…SPDM), and 212–247 (VPDQ…DDSD). The span at 13-22 (PDLSTFQSSI) shows a compositional bias: polar residues.

It belongs to the NC2 alpha/DRAP1 family. As to quaternary structure, forms the NCT transcriptional regulatory complex with nctB and mot1.

Its subcellular location is the nucleus. Functionally, part of the NCT transcriptional regulatory complex that acts as a key regulator of ergosterol biosynthesis and the azole exporter cdr1B. The NCT complex binds the promoters of genes linked to azole susceptibility, and especially represses the expression of cdr1B transporter. The polypeptide is NCT transcriptional regulatory complex subunit A (Aspergillus fumigatus (strain CBS 144.89 / FGSC A1163 / CEA10) (Neosartorya fumigata)).